The chain runs to 207 residues: Cytochrome c biogenesis ATP-binding export protein CcmA (207 aa).

The region spanning 4-207 is the ABC transporter domain; that stretch reads LEARELLCER…RISLTQTGAA (204 aa). 36–43 provides a ligand contact to ATP; it reads GSNGAGKT.

This sequence belongs to the ABC transporter superfamily. CcmA exporter (TC 3.A.1.107) family. The complex is composed of two ATP-binding proteins (CcmA) and two transmembrane proteins (CcmB).

It is found in the cell inner membrane. It carries out the reaction heme b(in) + ATP + H2O = heme b(out) + ADP + phosphate + H(+). In terms of biological role, part of the ABC transporter complex CcmAB involved in the biogenesis of c-type cytochromes; once thought to export heme, this seems not to be the case, but its exact role is uncertain. Responsible for energy coupling to the transport system. The sequence is that of Cytochrome c biogenesis ATP-binding export protein CcmA from Escherichia coli O6:H1 (strain CFT073 / ATCC 700928 / UPEC).